The chain runs to 688 residues: Sciellin (688 aa).

Over residues 1–25 (MSNVTLRKMSPTGNEMKSTTQGTTR) the composition is skewed to polar residues. Residues 1-29 (MSNVTLRKMSPTGNEMKSTTQGTTRKQQD) are disordered. Position 83 is an N6-acetyllysine (lysine 83). The disordered stretch occupies residues 134–231 (QPGGSLNANT…TNRSAERNIR (98 aa)). The span at 140-154 (NANTSNTIASTSATT) shows a compositional bias: low complexity. Residues 186–195 (VHPPIPPKPS) show a composition bias toward pro residues. Tandem repeats lie at residues 251–266 (GEELDNLIKMNKSLNR), 267–286 (NQGLDSLFRANPKVEEREKR), 287–306 (AKSLESLIYMSTRTDKDGKG), 307–326 (IQSLGSPIKVNQRTDKNEKG), 327–346 (RQNLESVAKVNARMNKTSRR), 347–366 (SEDLDNATEVNPKGHENTTG), 367–386 (KKDLDGLIKVDPETNKNITR), 387–406 (GQSLDNLIKVTPEVKRSNQG), 407–426 (SKDLNNFIKVYPGTEKSTEG), 427–446 (GQSLDSLIKVTPERNRTNQG), 447–465 (NQDLENLIKVIPSANKSSE), 466–484 (QGLDEHINVSPKAVKNTDG), 485–504 (KQDLDKLIKVNPEIFTNNQR), 505–523 (NQDLANLIKVNPAVIRNNQ), 524–543 (SQDLDNLIKVKPSALRNTNR), and 544–563 (DQNLENLIEVNSHVSENKNG). The 16 X approximate tandem repeats stretch occupies residues 251 to 563 (GEELDNLIKM…NSHVSENKNG (313 aa)). The residue at position 289 (serine 289) is a Phosphoserine. Positions 340–373 (MNKTSRRSEDLDNATEVNPKGHENTTGKKDLDGL) are disordered. Basic and acidic residues predominate over residues 358 to 373 (PKGHENTTGKKDLDGL). Phosphoserine is present on serine 389. In terms of domain architecture, LIM zinc-binding spans 619–685 (DMCTYCRKPL…EPCYSKIMAK (67 aa)).

Highly expressed in esophagus. It is also expressed in keratinocytes, amniotic tissue, foreskin stratum spinosum and stratum granulosum, hair follicle and nail.

The protein resides in the cytoplasm. It localises to the membrane. Functionally, may function in the assembly or regulation of proteins in the cornified envelope. The LIM domain may be involved in homotypic or heterotypic associations and may function to localize sciellin to the cornified envelope. In Homo sapiens (Human), this protein is Sciellin (SCEL).